The sequence spans 332 residues: L-lactate dehydrogenase C chain (332 aa).

Serine 2 carries the post-translational modification Blocked amino end (Ser). NAD(+)-binding positions include 29-57 (GNVG…DTNK) and arginine 99. Residues arginine 106, asparagine 138, and arginine 169 each coordinate substrate. NAD(+) is bound at residue asparagine 138. Histidine 193 serves as the catalytic Proton acceptor. Position 248 (threonine 248) interacts with substrate.

It belongs to the LDH/MDH superfamily. LDH family. In terms of assembly, homotetramer. Interacts with RABL2/RABL2A; binds preferentially to GTP-bound RABL2. In terms of tissue distribution, expressed within the midpiece of sperm tail (at protein level).

The protein localises to the cytoplasm. The enzyme catalyses (S)-lactate + NAD(+) = pyruvate + NADH + H(+). The protein operates within fermentation; pyruvate fermentation to lactate; (S)-lactate from pyruvate: step 1/1. Possible role in sperm motility. The protein is L-lactate dehydrogenase C chain (Ldhc) of Mus musculus (Mouse).